We begin with the raw amino-acid sequence, 438 residues long: tRNA-2-methylthio-N(6)-dimethylallyladenosine synthase (438 aa).

One can recognise an MTTase N-terminal domain in the interval 4–120 (KKLYIDTVGC…VPEMVKDAEA (117 aa)). [4Fe-4S] cluster is bound by residues C13, C49, C83, C158, C162, and C165. In terms of domain architecture, Radical SAM core spans 144-377 (GRKRVSAFVT…QAVHSRIHNE (234 aa)). One can recognise a TRAM domain in the interval 377 to 438 (ETYVGSTQQV…YANSLLGELL (62 aa)).

The protein belongs to the methylthiotransferase family. MiaB subfamily. In terms of assembly, monomer. [4Fe-4S] cluster is required as a cofactor.

It is found in the cytoplasm. It carries out the reaction N(6)-dimethylallyladenosine(37) in tRNA + (sulfur carrier)-SH + AH2 + 2 S-adenosyl-L-methionine = 2-methylsulfanyl-N(6)-dimethylallyladenosine(37) in tRNA + (sulfur carrier)-H + 5'-deoxyadenosine + L-methionine + A + S-adenosyl-L-homocysteine + 2 H(+). In terms of biological role, catalyzes the methylthiolation of N6-(dimethylallyl)adenosine (i(6)A), leading to the formation of 2-methylthio-N6-(dimethylallyl)adenosine (ms(2)i(6)A) at position 37 in tRNAs that read codons beginning with uridine. The sequence is that of tRNA-2-methylthio-N(6)-dimethylallyladenosine synthase from Trichlorobacter lovleyi (strain ATCC BAA-1151 / DSM 17278 / SZ) (Geobacter lovleyi).